The following is a 364-amino-acid chain: Alanine racemase (364 aa).

Residue Lys34 is the Proton acceptor; specific for D-alanine of the active site. Residue Lys34 is modified to N6-(pyridoxal phosphate)lysine. Arg129 is a substrate binding site. Tyr259 functions as the Proton acceptor; specific for L-alanine in the catalytic mechanism. Met307 contributes to the substrate binding site.

The protein belongs to the alanine racemase family. Requires pyridoxal 5'-phosphate as cofactor.

The enzyme catalyses L-alanine = D-alanine. It participates in amino-acid biosynthesis; D-alanine biosynthesis; D-alanine from L-alanine: step 1/1. Its function is as follows. Catalyzes the interconversion of L-alanine and D-alanine. May also act on other amino acids. The protein is Alanine racemase (alr) of Coxiella burnetii (strain Dugway 5J108-111).